We begin with the raw amino-acid sequence, 414 residues long: Probable 26S proteasome regulatory subunit 6B (414 aa).

202 to 209 (GPPGCGKT) contributes to the ATP binding site.

It belongs to the AAA ATPase family.

The protein resides in the cytoplasm. Its subcellular location is the nucleus. Functionally, the 26S proteasome is involved in the ATP-dependent degradation of ubiquitinated proteins. The regulatory (or ATPase) complex confers ATP dependency and substrate specificity to the 26S complex. This chain is Probable 26S proteasome regulatory subunit 6B (rpt-3), found in Caenorhabditis elegans.